Consider the following 766-residue polypeptide: Tripartite terminase subunit 1 (766 aa).

The C3H1-type zinc-finger motif lies at 191–219 (CSVCFEELCVTANQGEAVHRRLLECTCDH). Residue 683–690 (FSSVFHCG) participates in ATP binding.

The protein belongs to the herpesviridae TRM1 protein family. As to quaternary structure, associates with TRM2 and TRM3 to form the tripartite terminase complex. Interacts with portal protein.

The protein resides in the host nucleus. Component of the molecular motor that translocates viral genomic DNA in empty capsid during DNA packaging. Forms a tripartite terminase complex together with TRM2 and TRM3 in the host cytoplasm. Once the complex reaches the host nucleus, it interacts with the capsid portal vertex. This portal forms a ring in which genomic DNA is translocated into the capsid. TRM1 carries an endonuclease activity that plays an important role for the cleavage of concatemeric viral DNA into unit length genomes. This is Tripartite terminase subunit 1 from Equus caballus (Horse).